The following is a 432-amino-acid chain: Adenylosuccinate synthetase (432 aa).

GTP is bound by residues 13–19 and 41–43; these read GDEGKGK and GHT. Asp14 serves as the catalytic Proton acceptor. The Mg(2+) site is built by Asp14 and Gly41. Residues 14-17, 39-42, Thr130, Arg144, Gln225, Thr240, and Arg304 contribute to the IMP site; these read DEGK and NAGH. His42 serves as the catalytic Proton donor. 300–306 provides a ligand contact to substrate; that stretch reads ATTGRRR. GTP contacts are provided by residues Arg306, 332–334, and 415–417; these read KLD and STG.

The protein belongs to the adenylosuccinate synthetase family. Homodimer. Mg(2+) serves as cofactor.

The protein localises to the cytoplasm. The enzyme catalyses IMP + L-aspartate + GTP = N(6)-(1,2-dicarboxyethyl)-AMP + GDP + phosphate + 2 H(+). It functions in the pathway purine metabolism; AMP biosynthesis via de novo pathway; AMP from IMP: step 1/2. Its function is as follows. Plays an important role in the de novo pathway of purine nucleotide biosynthesis. Catalyzes the first committed step in the biosynthesis of AMP from IMP. The sequence is that of Adenylosuccinate synthetase from Pectobacterium carotovorum subsp. carotovorum (strain PC1).